The primary structure comprises 116 residues: SGSCSLKTCWLQLADFRKVGDALKEKYDSAAAMKLNSRGKLVQVNSRFNAPTIHDLVYIDPSPDYCVRNESTGSLGTQGRLCNKTSEGMDGCELMCCGRGYDQFKTVQRERCHCKF.

The O-palmitoleoyl serine; by PORCN moiety is linked to residue Ser1. N-linked (GlcNAc...) asparagine glycans are attached at residues Asn69 and Asn83. Cysteines 82 and 97 form a disulfide.

Belongs to the Wnt family. Post-translationally, palmitoleoylation is required for efficient binding to frizzled receptors. Depalmitoleoylation leads to Wnt signaling pathway inhibition.

The protein localises to the secreted. It localises to the extracellular space. Its subcellular location is the extracellular matrix. Its function is as follows. Ligand for members of the frizzled family of seven transmembrane receptors. Can activate or inhibit canonical Wnt signaling, depending on receptor context. Required during embryogenesis for extension of the primary anterior-posterior axis. This is Protein Wnt-5a (WNT5A) from Anser caerulescens (Snow goose).